The sequence spans 145 residues: Large ribosomal subunit protein uL15 (145 aa).

A disordered region spans residues 1-43; that stretch reads MRLNTIKPGAGSKSAAKRVGRGIGSGLGKTCGRGHKGQKSRAG. Positions 21-31 are enriched in gly residues; sequence RGIGSGLGKTC.

The protein belongs to the universal ribosomal protein uL15 family. As to quaternary structure, part of the 50S ribosomal subunit.

Binds to the 23S rRNA. The polypeptide is Large ribosomal subunit protein uL15 (Aromatoleum aromaticum (strain DSM 19018 / LMG 30748 / EbN1) (Azoarcus sp. (strain EbN1))).